Here is a 743-residue protein sequence, read N- to C-terminus: Myb-related protein B (743 aa).

The segment at 1 to 29 (MSRRSRGDDLEDLQYQDTDSDVPEPKENR) is disordered. Residues 9–22 (DLEDLQYQDTDSDV) are compositionally biased toward acidic residues. 3 consecutive HTH myb-type domains span residues 26-77 (KENR…LRVL), 78-133 (HPDL…NPEV), and 134-184 (KKSS…KRKV). 3 DNA-binding regions (H-T-H motif) span residues 54–77 (WKTI…LRVL), 106–129 (WTLI…HNHL), and 157–180 (WAEI…NSTI). Disordered regions lie at residues 221–262 (VERS…SESA) and 381–406 (VTEN…TPVK).

In terms of assembly, component of the DREAM complex.

It localises to the nucleus. This is Myb-related protein B (mybl2) from Xenopus laevis (African clawed frog).